Reading from the N-terminus, the 465-residue chain is Interferon-inducible GTPase 5 (465 aa).

The IRG-type G domain maps to 53–235 (TRLEVGVTGE…PLLMSTWERD (183 aa)). Residues 62–69 (ESGAGKSS), 87–91 (TGVVE), 169–171 (KVD), and 216–218 (SNL) contribute to the GTP site. Phosphoserine occurs at positions 247 and 304. The tract at residues 405–438 (EEEEDTQPDVSLEAAGDNGVEKRGSGEGSMEEAP) is disordered.

Belongs to the TRAFAC class dynamin-like GTPase superfamily. IRG family.

It is found in the cell projection. Its subcellular location is the cilium. The protein resides in the flagellum. The protein localises to the lipid droplet. It carries out the reaction GTP + H2O = GDP + phosphate + H(+). Required for sperm motility and therefore male fertility, via positive regulation of spermatozoa fibrous sheath formation. This is Interferon-inducible GTPase 5 (IRGC) from Bos taurus (Bovine).